Consider the following 191-residue polypeptide: HTH-type transcriptional regulator SAR0097 (191 aa).

The HTH tetR-type domain occupies 12 to 74 (AEYNQQIILT…AIMDKKVDQM (63 aa)). Residues 37 to 56 (KMSDIAKISGVGVGTLYRHF) constitute a DNA-binding region (H-T-H motif).

The sequence is that of HTH-type transcriptional regulator SAR0097 from Staphylococcus aureus (strain MRSA252).